The chain runs to 125 residues: Small ribosomal subunit protein uS12 (125 aa).

3-methylthioaspartic acid is present on D89. Residues 106 to 125 (GVKDRKQSRSKYGAKRPKKA) form a disordered region. Positions 113-125 (SRSKYGAKRPKKA) are enriched in basic residues.

It belongs to the universal ribosomal protein uS12 family. Part of the 30S ribosomal subunit. Contacts proteins S8 and S17. May interact with IF1 in the 30S initiation complex.

In terms of biological role, with S4 and S5 plays an important role in translational accuracy. Its function is as follows. Interacts with and stabilizes bases of the 16S rRNA that are involved in tRNA selection in the A site and with the mRNA backbone. Located at the interface of the 30S and 50S subunits, it traverses the body of the 30S subunit contacting proteins on the other side and probably holding the rRNA structure together. The combined cluster of proteins S8, S12 and S17 appears to hold together the shoulder and platform of the 30S subunit. The polypeptide is Small ribosomal subunit protein uS12 (Aromatoleum aromaticum (strain DSM 19018 / LMG 30748 / EbN1) (Azoarcus sp. (strain EbN1))).